Consider the following 417-residue polypeptide: D-amino acid dehydrogenase (417 aa).

3-17 (IVVLGGGVVGVTSAW) lines the FAD pocket.

The protein belongs to the DadA oxidoreductase family. FAD is required as a cofactor.

The catalysed reaction is a D-alpha-amino acid + A + H2O = a 2-oxocarboxylate + AH2 + NH4(+). It participates in amino-acid degradation; D-alanine degradation; NH(3) and pyruvate from D-alanine: step 1/1. Functionally, oxidative deamination of D-amino acids. The polypeptide is D-amino acid dehydrogenase (Aeromonas hydrophila subsp. hydrophila (strain ATCC 7966 / DSM 30187 / BCRC 13018 / CCUG 14551 / JCM 1027 / KCTC 2358 / NCIMB 9240 / NCTC 8049)).